The primary structure comprises 113 residues: Small ribosomal subunit protein bS6 (113 aa).

The protein belongs to the bacterial ribosomal protein bS6 family.

Binds together with bS18 to 16S ribosomal RNA. The polypeptide is Small ribosomal subunit protein bS6 (Pseudoalteromonas translucida (strain TAC 125)).